Here is a 486-residue protein sequence, read N- to C-terminus: UDP-N-acetylmuramoyl-L-alanyl-D-glutamate--2,6-diaminopimelate ligase (486 aa).

Serine 30 provides a ligand contact to UDP-N-acetyl-alpha-D-muramoyl-L-alanyl-D-glutamate. 111–117 (GTNGKTT) is a binding site for ATP. Residues 153 to 154 (TT), serine 180, glutamine 186, and arginine 188 each bind UDP-N-acetyl-alpha-D-muramoyl-L-alanyl-D-glutamate. Lysine 220 is subject to N6-carboxylysine. Residues arginine 378, 402 to 405 (DNPR), glycine 455, and glutamate 459 contribute to the meso-2,6-diaminopimelate site. A Meso-diaminopimelate recognition motif motif is present at residues 402-405 (DNPR).

The protein belongs to the MurCDEF family. MurE subfamily. Mg(2+) serves as cofactor. Carboxylation is probably crucial for Mg(2+) binding and, consequently, for the gamma-phosphate positioning of ATP.

It is found in the cytoplasm. It catalyses the reaction UDP-N-acetyl-alpha-D-muramoyl-L-alanyl-D-glutamate + meso-2,6-diaminopimelate + ATP = UDP-N-acetyl-alpha-D-muramoyl-L-alanyl-gamma-D-glutamyl-meso-2,6-diaminopimelate + ADP + phosphate + H(+). The protein operates within cell wall biogenesis; peptidoglycan biosynthesis. Its function is as follows. Catalyzes the addition of meso-diaminopimelic acid to the nucleotide precursor UDP-N-acetylmuramoyl-L-alanyl-D-glutamate (UMAG) in the biosynthesis of bacterial cell-wall peptidoglycan. This Parabacteroides distasonis (strain ATCC 8503 / DSM 20701 / CIP 104284 / JCM 5825 / NCTC 11152) protein is UDP-N-acetylmuramoyl-L-alanyl-D-glutamate--2,6-diaminopimelate ligase.